Consider the following 130-residue polypeptide: Large ribosomal subunit protein bL12 (130 aa).

Belongs to the bacterial ribosomal protein bL12 family. In terms of assembly, homodimer. Part of the ribosomal stalk of the 50S ribosomal subunit. Forms a multimeric L10(L12)X complex, where L10 forms an elongated spine to which 2 to 4 L12 dimers bind in a sequential fashion. Binds GTP-bound translation factors.

In terms of biological role, forms part of the ribosomal stalk which helps the ribosome interact with GTP-bound translation factors. Is thus essential for accurate translation. The protein is Large ribosomal subunit protein bL12 of Prochlorococcus marinus (strain SARG / CCMP1375 / SS120).